The chain runs to 120 residues: Ribosome-binding factor A (120 aa).

Belongs to the RbfA family. In terms of assembly, monomer. Binds 30S ribosomal subunits, but not 50S ribosomal subunits or 70S ribosomes.

Its subcellular location is the cytoplasm. Its function is as follows. One of several proteins that assist in the late maturation steps of the functional core of the 30S ribosomal subunit. Associates with free 30S ribosomal subunits (but not with 30S subunits that are part of 70S ribosomes or polysomes). Required for efficient processing of 16S rRNA. May interact with the 5'-terminal helix region of 16S rRNA. This chain is Ribosome-binding factor A, found in Chlamydia pneumoniae (Chlamydophila pneumoniae).